The primary structure comprises 94 residues: uncharacterized protein (94 aa).

To M.tuberculosis Rv2632c.

This is an uncharacterized protein from Mycobacterium tuberculosis (strain CDC 1551 / Oshkosh).